Consider the following 636-residue polypeptide: Biosynthetic arginine decarboxylase (636 aa).

Residue Lys-101 is modified to N6-(pyridoxal phosphate)lysine. Phe-286 to Tyr-296 contacts substrate.

This sequence belongs to the Orn/Lys/Arg decarboxylase class-II family. SpeA subfamily. Requires Mg(2+) as cofactor. The cofactor is pyridoxal 5'-phosphate.

The catalysed reaction is L-arginine + H(+) = agmatine + CO2. Its pathway is amine and polyamine biosynthesis; agmatine biosynthesis; agmatine from L-arginine: step 1/1. Its function is as follows. Catalyzes the biosynthesis of agmatine from arginine. This is Biosynthetic arginine decarboxylase from Shewanella frigidimarina (strain NCIMB 400).